Here is a 202-residue protein sequence, read N- to C-terminus: Large ribosomal subunit protein bL25 (202 aa).

The protein belongs to the bacterial ribosomal protein bL25 family. CTC subfamily. As to quaternary structure, part of the 50S ribosomal subunit; part of the 5S rRNA/L5/L18/L25 subcomplex. Contacts the 5S rRNA. Binds to the 5S rRNA independently of L5 and L18.

Functionally, this is one of the proteins that binds to the 5S RNA in the ribosome where it forms part of the central protuberance. This Clostridium perfringens (strain ATCC 13124 / DSM 756 / JCM 1290 / NCIMB 6125 / NCTC 8237 / Type A) protein is Large ribosomal subunit protein bL25.